The chain runs to 409 residues: Tyrosine--tRNA ligase (409 aa).

The 'HIGH' region signature appears at 43–52; that stretch reads PTAPDLHLGH. The short motif at 227–231 is the 'KMSKS' region element; the sequence is KMSKS. Residue Lys-230 coordinates ATP. One can recognise an S4 RNA-binding domain in the interval 338–399; that stretch reads LALPQLLKLA…GKRKFAKVTL (62 aa).

Belongs to the class-I aminoacyl-tRNA synthetase family. TyrS type 2 subfamily. In terms of assembly, homodimer.

The protein localises to the cytoplasm. It catalyses the reaction tRNA(Tyr) + L-tyrosine + ATP = L-tyrosyl-tRNA(Tyr) + AMP + diphosphate + H(+). In terms of biological role, catalyzes the attachment of tyrosine to tRNA(Tyr) in a two-step reaction: tyrosine is first activated by ATP to form Tyr-AMP and then transferred to the acceptor end of tRNA(Tyr). The chain is Tyrosine--tRNA ligase from Nitrosomonas europaea (strain ATCC 19718 / CIP 103999 / KCTC 2705 / NBRC 14298).